We begin with the raw amino-acid sequence, 258 residues long: Sugar fermentation stimulation protein homolog (258 aa).

It belongs to the SfsA family.

The protein is Sugar fermentation stimulation protein homolog of Marinomonas sp. (strain MWYL1).